The primary structure comprises 631 residues: Phosphomethylpyrimidine synthase (631 aa).

Substrate is bound by residues Asn239, Met268, Tyr297, His333, 353–355 (SRG), 394–397 (DGLR), and Glu433. His437 contacts Zn(2+). A substrate-binding site is contributed by Tyr460. Zn(2+) is bound at residue His501. 3 residues coordinate [4Fe-4S] cluster: Cys581, Cys584, and Cys589.

This sequence belongs to the ThiC family. As to quaternary structure, homodimer. Requires [4Fe-4S] cluster as cofactor.

The catalysed reaction is 5-amino-1-(5-phospho-beta-D-ribosyl)imidazole + S-adenosyl-L-methionine = 4-amino-2-methyl-5-(phosphooxymethyl)pyrimidine + CO + 5'-deoxyadenosine + formate + L-methionine + 3 H(+). The protein operates within cofactor biosynthesis; thiamine diphosphate biosynthesis. Its function is as follows. Catalyzes the synthesis of the hydroxymethylpyrimidine phosphate (HMP-P) moiety of thiamine from aminoimidazole ribotide (AIR) in a radical S-adenosyl-L-methionine (SAM)-dependent reaction. The polypeptide is Phosphomethylpyrimidine synthase (Escherichia coli O6:K15:H31 (strain 536 / UPEC)).